Consider the following 122-residue polypeptide: Basic phospholipase A2 homolog ecarpholin S (122 aa).

Cystine bridges form between Cys-26–Cys-115, Cys-28–Cys-44, Cys-43–Cys-95, Cys-49–Cys-122, Cys-50–Cys-88, Cys-57–Cys-81, and Cys-75–Cys-86. Residues 105–117 (KKYTYYPNFWCKG) are important for membrane-damaging activities in eukaryotes and bacteria; heparin-binding.

Expressed by the venom gland.

It is found in the secreted. Its activity is regulated as follows. Suramin inhibits the myotoxic activity. Its function is as follows. Snake venom phospholipase A2 homolog that lacks enzymatic activity. Shows high myotoxin activities and displays edema-inducing activities. The protein is Basic phospholipase A2 homolog ecarpholin S of Echis carinatus (Saw-scaled viper).